The chain runs to 264 residues: Undecaprenyl-diphosphatase (264 aa).

7 consecutive transmembrane segments (helical) span residues 34-54 (LLNLPIAIAYSFGLFMEMGSI), 75-95 (LLYLAIITIITGLVGVPLYII), 104-124 (YDPSIPMIILGIALIVDGLYI), 137-157 (LSLKNIILIGIAQGLAALPGV), 180-200 (YSYLAYIPAAVGAVGTTILFS), 207-227 (VISLIGIGGVLISVISAFIIG), and 243-263 (IYIIDFTLGGIAIVVSVLTIL).

Belongs to the UppP family.

The protein resides in the cell membrane. It catalyses the reaction di-trans,octa-cis-undecaprenyl diphosphate + H2O = di-trans,octa-cis-undecaprenyl phosphate + phosphate + H(+). Functionally, catalyzes the dephosphorylation of undecaprenyl diphosphate (UPP). The polypeptide is Undecaprenyl-diphosphatase (Sulfurisphaera tokodaii (strain DSM 16993 / JCM 10545 / NBRC 100140 / 7) (Sulfolobus tokodaii)).